Here is a 78-residue protein sequence, read N- to C-terminus: Small ribosomal subunit protein bS18 (78 aa).

The protein belongs to the bacterial ribosomal protein bS18 family. Part of the 30S ribosomal subunit. Forms a tight heterodimer with protein bS6.

Binds as a heterodimer with protein bS6 to the central domain of the 16S rRNA, where it helps stabilize the platform of the 30S subunit. The protein is Small ribosomal subunit protein bS18 of Geobacillus kaustophilus (strain HTA426).